Reading from the N-terminus, the 195-residue chain is Protein hunchback (195 aa).

Disordered stretches follow at residues 16-57, 64-83, and 155-195; these read SHHH…SHTN, LKQQ…QQPM, and LTPP…KYMA. Residues 17–29 are compositionally biased toward basic residues; the sequence is HHHHHHHAHHSHH. Low complexity-rich tracts occupy residues 33–44 and 66–81; these read SNSNSNASSPHQ and QQQQ…QQQQ. Basic and acidic residues predominate over residues 176-195; it reads EPEKEHDLMSNSSEDMKYMA.

Belongs to the hunchback C2H2-type zinc-finger protein family.

The protein resides in the nucleus. Its function is as follows. Gap class segmentation protein that controls development of head structures. This Drosophila dasycnemia (Fruit fly) protein is Protein hunchback (hb).